A 120-amino-acid polypeptide reads, in one-letter code: uncharacterized protein (120 aa).

The chain crosses the membrane as a helical span at residues 19 to 41 (YPELFITWCVMTYTFGVAGYMLG). Residues 57-78 (SKNAHPWEDTKSSSGKSDESLD) form a disordered region. Residues 61–75 (HPWEDTKSSSGKSDE) are compositionally biased toward basic and acidic residues.

Its subcellular location is the membrane. This is an uncharacterized protein from Schizosaccharomyces pombe (strain 972 / ATCC 24843) (Fission yeast).